The primary structure comprises 636 residues: Probable potassium transport system protein Kup (636 aa).

Transmembrane regions (helical) follow at residues 22–42 (LGLL…SPLY), 64–84 (ILSL…VMFI), 115–135 (LMVI…MITP), 150–170 (FDGI…ALFL), 182–202 (LFGP…VHGI), 220–240 (FFVV…LALT), 261–281 (WFIL…ALLL), 293–313 (LLAP…ATVI), 351–371 (IYIG…VIGF), 383–403 (VAVT…MLLL), 408–428 (PVLA…FFAA), and 433–453 (IVQG…LMST).

It belongs to the HAK/KUP transporter (TC 2.A.72) family.

Its subcellular location is the cell inner membrane. The catalysed reaction is K(+)(in) + H(+)(in) = K(+)(out) + H(+)(out). In terms of biological role, transport of potassium into the cell. Likely operates as a K(+):H(+) symporter. In Pseudomonas putida (strain GB-1), this protein is Probable potassium transport system protein Kup.